The following is a 209-amino-acid chain: MATVFSRALGALVLGVACALLAGCASVRPANDLFAGTQDGDATITRYQGRFSARYVQDDAQQSAVGSFLWRERGADVQLELMSPLGQTLAIVSQNRQGATLELPNQPPRRAAEVDTLMQDALGFSLPVSGLRDWLRARPTPGTPARVARDAQSRPETIEQNGWTVHYVAWSDDGDNSTANARVRRLDLDRPQGAGGAPGPLSVRLVLDQ.

Positions 1-17 (MATVFSRALGALVLGVA) are cleaved as a signal peptide. Cys-18 carries the N-palmitoyl cysteine lipid modification. Cys-18 carries the S-diacylglycerol cysteine lipid modification.

This sequence belongs to the LolB family. In terms of assembly, monomer.

The protein resides in the cell outer membrane. In terms of biological role, plays a critical role in the incorporation of lipoproteins in the outer membrane after they are released by the LolA protein. This Ralstonia nicotianae (strain ATCC BAA-1114 / GMI1000) (Ralstonia solanacearum) protein is Outer-membrane lipoprotein LolB.